We begin with the raw amino-acid sequence, 201 residues long: Ribosome maturation factor RimP (201 aa).

This sequence belongs to the RimP family.

The protein localises to the cytoplasm. Functionally, required for maturation of 30S ribosomal subunits. The sequence is that of Ribosome maturation factor RimP from Rhizobium johnstonii (strain DSM 114642 / LMG 32736 / 3841) (Rhizobium leguminosarum bv. viciae).